Consider the following 333-residue polypeptide: Lipoyl synthase (333 aa).

Residues 1-29 (MTDSAAGATEVATPATPSNKPYDATAKQK) form a disordered region. C80, C85, C91, C106, C110, C113, and S320 together coordinate [4Fe-4S] cluster. A Radical SAM core domain is found at 91–309 (CFGKGTATFM…EEKAYEMGFT (219 aa)).

This sequence belongs to the radical SAM superfamily. Lipoyl synthase family. [4Fe-4S] cluster serves as cofactor.

The protein resides in the cytoplasm. It carries out the reaction [[Fe-S] cluster scaffold protein carrying a second [4Fe-4S](2+) cluster] + N(6)-octanoyl-L-lysyl-[protein] + 2 oxidized [2Fe-2S]-[ferredoxin] + 2 S-adenosyl-L-methionine + 4 H(+) = [[Fe-S] cluster scaffold protein] + N(6)-[(R)-dihydrolipoyl]-L-lysyl-[protein] + 4 Fe(3+) + 2 hydrogen sulfide + 2 5'-deoxyadenosine + 2 L-methionine + 2 reduced [2Fe-2S]-[ferredoxin]. It functions in the pathway protein modification; protein lipoylation via endogenous pathway; protein N(6)-(lipoyl)lysine from octanoyl-[acyl-carrier-protein]: step 2/2. In terms of biological role, catalyzes the radical-mediated insertion of two sulfur atoms into the C-6 and C-8 positions of the octanoyl moiety bound to the lipoyl domains of lipoate-dependent enzymes, thereby converting the octanoylated domains into lipoylated derivatives. The sequence is that of Lipoyl synthase from Ralstonia pickettii (strain 12J).